The sequence spans 287 residues: Inorganic pyrophosphatase (287 aa).

T65 carries the post-translational modification Phosphothreonine. R79 is a binding site for diphosphate. Catalysis depends on Y90, which acts as the Proton donor. Residues D116, D121, and D153 each contribute to the Mg(2+) site. K239 participates in a covalent cross-link: Glycyl lysine isopeptide (Lys-Gly) (interchain with G-Cter in ubiquitin). T251 is subject to Phosphothreonine. S266 is subject to Phosphoserine. K279 participates in a covalent cross-link: Glycyl lysine isopeptide (Lys-Gly) (interchain with G-Cter in ubiquitin). S286 is modified (phosphoserine).

Belongs to the PPase family. In terms of assembly, homodimer. Mg(2+) serves as cofactor.

It localises to the cytoplasm. It catalyses the reaction diphosphate + H2O = 2 phosphate + H(+). This is Inorganic pyrophosphatase (IPP1) from Saccharomyces cerevisiae (strain ATCC 204508 / S288c) (Baker's yeast).